The chain runs to 142 residues: ATP synthase epsilon chain (142 aa).

This sequence belongs to the ATPase epsilon chain family. F-type ATPases have 2 components, CF(1) - the catalytic core - and CF(0) - the membrane proton channel. CF(1) has five subunits: alpha(3), beta(3), gamma(1), delta(1), epsilon(1). CF(0) has three main subunits: a, b and c.

Its subcellular location is the cell inner membrane. In terms of biological role, produces ATP from ADP in the presence of a proton gradient across the membrane. In Histophilus somni (strain 2336) (Haemophilus somnus), this protein is ATP synthase epsilon chain.